The chain runs to 180 residues: UPF0227 protein KPN78578_10770 (180 aa).

It belongs to the UPF0227 family.

This is UPF0227 protein KPN78578_10770 from Klebsiella pneumoniae subsp. pneumoniae (strain ATCC 700721 / MGH 78578).